The following is a 253-amino-acid chain: Isopentenyl-diphosphate delta-isomerase IDI1 (253 aa).

Residue Lys-61 coordinates substrate. Mg(2+)-binding residues include His-65 and His-76. The region spanning 74 to 224 (LLHRAFSVFL…SLVFTPWFKL (151 aa)) is the Nudix hydrolase domain. Positions 94 and 99 each coordinate substrate. Cys-111 is an active-site residue. Substrate is bound at residue Ser-112. Positions 112–145 (SHPLHIPTETGSTLEDSIAGVKRAAQRKLEHELG) match the Nudix box motif. Residues Glu-174 and Glu-176 each coordinate Mg(2+). Glu-176 is a catalytic residue.

It belongs to the IPP isomerase type 1 family. Mg(2+) is required as a cofactor.

The catalysed reaction is isopentenyl diphosphate = dimethylallyl diphosphate. Its pathway is isoprenoid biosynthesis; dimethylallyl diphosphate biosynthesis; dimethylallyl diphosphate from isopentenyl diphosphate: step 1/1. Isopentenyl-diphosphate delta-isomerase; part of the second module of ergosterol biosynthesis pathway that includes the middle steps of the pathway. IDI1 catalyzes the 1,3-allylic rearrangement of isopentenyl (IPP) to its highly electrophilic allylic isomer, dimethylallyl diphosphate (DMAPP). The second module is carried out in the vacuole and involves the formation of farnesyl diphosphate, which is also an important intermediate in the biosynthesis of ubiquinone, dolichol, heme and prenylated proteins. Activity by the mevalonate kinase ERG12 (FG05912) first converts mevalonate into 5-phosphomevalonate. 5-phosphomevalonate is then further converted to 5-diphosphomevalonate by the phosphomevalonate kinase ERG8 (FG09764). The diphosphomevalonate decarboxylase ERG19 (FG10424) then produces isopentenyl diphosphate. The isopentenyl-diphosphate delta-isomerase IDI1 (FG09722) then catalyzes the 1,3-allylic rearrangement of the homoallylic substrate isopentenyl (IPP) to its highly electrophilic allylic isomer, dimethylallyl diphosphate (DMAPP). Finally the farnesyl diphosphate synthase ERG20 (FG06784) catalyzes the sequential condensation of isopentenyl pyrophosphate with dimethylallyl pyrophosphate, and then with the resultant geranylpyrophosphate to the ultimate product farnesyl pyrophosphate. The sequence is that of Isopentenyl-diphosphate delta-isomerase IDI1 from Gibberella zeae (strain ATCC MYA-4620 / CBS 123657 / FGSC 9075 / NRRL 31084 / PH-1) (Wheat head blight fungus).